We begin with the raw amino-acid sequence, 151 residues long: UPF0756 membrane protein GK2737 (151 aa).

The next 4 helical transmembrane spans lie at 5–25 (VLFL…SLIV), 53–73 (WGVT…EIGF), 79–99 (SLQS…ALIA), and 121–141 (ILAV…AGIA).

This sequence belongs to the UPF0756 family.

Its subcellular location is the cell membrane. The chain is UPF0756 membrane protein GK2737 from Geobacillus kaustophilus (strain HTA426).